The primary structure comprises 249 residues: tRNA (guanine-N(1)-)-methyltransferase (249 aa).

S-adenosyl-L-methionine contacts are provided by residues G113 and L133–L138.

Belongs to the RNA methyltransferase TrmD family. As to quaternary structure, homodimer.

Its subcellular location is the cytoplasm. The catalysed reaction is guanosine(37) in tRNA + S-adenosyl-L-methionine = N(1)-methylguanosine(37) in tRNA + S-adenosyl-L-homocysteine + H(+). Functionally, specifically methylates guanosine-37 in various tRNAs. The polypeptide is tRNA (guanine-N(1)-)-methyltransferase (Leptothrix cholodnii (strain ATCC 51168 / LMG 8142 / SP-6) (Leptothrix discophora (strain SP-6))).